The primary structure comprises 720 residues: Glycine--tRNA ligase beta subunit (720 aa).

The protein belongs to the class-II aminoacyl-tRNA synthetase family. As to quaternary structure, tetramer of two alpha and two beta subunits.

Its subcellular location is the cytoplasm. The enzyme catalyses tRNA(Gly) + glycine + ATP = glycyl-tRNA(Gly) + AMP + diphosphate. In Acidovorax ebreus (strain TPSY) (Diaphorobacter sp. (strain TPSY)), this protein is Glycine--tRNA ligase beta subunit.